The sequence spans 105 residues: Thioredoxin (105 aa).

The 104-residue stretch at 2 to 105 folds into the Thioredoxin domain; that stretch reads VKQIESKYAF…KLEATINELI (104 aa). At lysine 3 the chain carries N6-acetyllysine. At lysine 8 the chain carries N6-succinyllysine. Active-site nucleophile residues include cysteine 32 and cysteine 35. An intrachain disulfide couples cysteine 32 to cysteine 35. Position 39 is an N6-acetyllysine (lysine 39). An S-nitrosocysteine mark is found at cysteine 62 and cysteine 69. The residue at position 73 (cysteine 73) is an S-nitrosocysteine; alternate. Lysine 94 bears the N6-acetyllysine; alternate mark. At lysine 94 the chain carries N6-succinyllysine; alternate.

Belongs to the thioredoxin family. Homodimer; disulfide-linked. Interacts with TXNIP through the redox-active site. Interacts with MAP3K5 and CASP3. Interacts with APEX1; the interaction stimulates the FOS/JUN AP-1 DNA-binding activity in a redox-dependent manner. Post-translationally, in the fully reduced protein, both Cys-69 and Cys-73 are nitrosylated in response to nitric oxide (NO). When two disulfide bonds are present in the protein, only Cys-73 is nitrosylated. Cys-73 can serve as donor for nitrosylation of target proteins.

Its subcellular location is the nucleus. It localises to the cytoplasm. The protein resides in the secreted. Functionally, participates in various redox reactions through the reversible oxidation of its active center dithiol to a disulfide and catalyzes dithiol-disulfide exchange reactions. Plays a role in the reversible S-nitrosylation of cysteine residues in target proteins, and thereby contributes to the response to intracellular nitric oxide. Nitrosylates the active site Cys of CASP3 in response to nitric oxide (NO), and thereby inhibits caspase-3 activity. Induces the FOS/JUN AP-1 DNA binding activity in ionizing radiation (IR) cells through its oxidation/reduction status and stimulates AP-1 transcriptional activity. This Bos taurus (Bovine) protein is Thioredoxin (TXN).